The primary structure comprises 204 residues: Outer-membrane lipoprotein LolB (204 aa).

Positions 1 to 16 are cleaved as a signal peptide; it reads MLRHLLVFSLIALLAG. C17 carries N-palmitoyl cysteine lipidation. C17 is lipidated: S-diacylglycerol cysteine.

The protein belongs to the LolB family. In terms of assembly, monomer.

The protein resides in the cell outer membrane. In terms of biological role, plays a critical role in the incorporation of lipoproteins in the outer membrane after they are released by the LolA protein. The chain is Outer-membrane lipoprotein LolB from Ectopseudomonas mendocina (strain ymp) (Pseudomonas mendocina).